Reading from the N-terminus, the 199-residue chain is FMN-dependent NADH:quinone oxidoreductase (199 aa).

Residues 17–19 (SNS) and 87–90 (MYNF) contribute to the FMN site.

The protein belongs to the azoreductase type 1 family. As to quaternary structure, homodimer. The cofactor is FMN.

The enzyme catalyses 2 a quinone + NADH + H(+) = 2 a 1,4-benzosemiquinone + NAD(+). It catalyses the reaction N,N-dimethyl-1,4-phenylenediamine + anthranilate + 2 NAD(+) = 2-(4-dimethylaminophenyl)diazenylbenzoate + 2 NADH + 2 H(+). In terms of biological role, quinone reductase that provides resistance to thiol-specific stress caused by electrophilic quinones. Its function is as follows. Also exhibits azoreductase activity. Catalyzes the reductive cleavage of the azo bond in aromatic azo compounds to the corresponding amines. The protein is FMN-dependent NADH:quinone oxidoreductase of Mycoplasma mycoides subsp. mycoides SC (strain CCUG 32753 / NCTC 10114 / PG1).